A 279-amino-acid chain; its full sequence is Phycobilisome rod-core linker polypeptide CpcG1 (279 aa).

Residues 11 to 189 (TTQNQRVEGY…YWRNRLLEQF (179 aa)) enclose the PBS-linker domain.

It belongs to the phycobilisome linker protein family. As to quaternary structure, the phycobilisome is a hemidiscoidal structure that is composed of two distinct substructures: a core complex and a number of rods radiating from the core.

It is found in the cellular thylakoid membrane. In terms of biological role, rod-core linker protein required for attachment of phycocyanin to allophycocyanin in cores of phycobilisomes. Its function is as follows. Linker polypeptides determine the state of aggregation and the location of the disk-shaped phycobiliprotein units within the phycobilisome and modulate their spectroscopic properties in order to mediate a directed and optimal energy transfer. In Mastigocladus laminosus (Fischerella sp.), this protein is Phycobilisome rod-core linker polypeptide CpcG1 (cpcG1).